We begin with the raw amino-acid sequence, 67 residues long: Alpha-toxin Cn12 (67 aa).

The region spanning 1-66 is the LCN-type CS-alpha/beta domain; sequence RDGYPLASNG…WGDSGTGPCR (66 aa). 4 cysteine pairs are disulfide-bonded: Cys11-Cys65, Cys15-Cys40, Cys25-Cys45, and Cys29-Cys47.

Expressed by the venom gland.

The protein resides in the secreted. Its function is as follows. Alpha toxins bind voltage-independently at site-3 of sodium channels (Nav) and inhibit the inactivation of the activated channels, thereby blocking neuronal transmission. This toxin binds, in vitro, to sodium channels and inhibits the inactivation of the activated channels. Seems not toxic to mice, crickets and sweet-water shrimps. This is Alpha-toxin Cn12 from Centruroides noxius (Mexican scorpion).